Here is a 635-residue protein sequence, read N- to C-terminus: 1-deoxy-D-xylulose-5-phosphate synthase (635 aa).

Thiamine diphosphate contacts are provided by residues His72 and 113–115; that span reads GHA. Asp144 contacts Mg(2+). Residues 145–146, Asn174, Tyr287, and Glu370 contribute to the thiamine diphosphate site; that span reads GA. Asn174 provides a ligand contact to Mg(2+).

Belongs to the transketolase family. DXPS subfamily. As to quaternary structure, homodimer. Requires Mg(2+) as cofactor. Thiamine diphosphate serves as cofactor.

It catalyses the reaction D-glyceraldehyde 3-phosphate + pyruvate + H(+) = 1-deoxy-D-xylulose 5-phosphate + CO2. The protein operates within metabolic intermediate biosynthesis; 1-deoxy-D-xylulose 5-phosphate biosynthesis; 1-deoxy-D-xylulose 5-phosphate from D-glyceraldehyde 3-phosphate and pyruvate: step 1/1. Catalyzes the acyloin condensation reaction between C atoms 2 and 3 of pyruvate and glyceraldehyde 3-phosphate to yield 1-deoxy-D-xylulose-5-phosphate (DXP). The protein is 1-deoxy-D-xylulose-5-phosphate synthase of Trichormus variabilis (strain ATCC 29413 / PCC 7937) (Anabaena variabilis).